The following is a 179-amino-acid chain: Ribosome maturation factor RimM (179 aa).

The PRC barrel domain occupies 102 to 179; the sequence is DGEYYWYQLE…EMKVDWDADF (78 aa).

It belongs to the RimM family. Binds ribosomal protein uS19.

Its subcellular location is the cytoplasm. In terms of biological role, an accessory protein needed during the final step in the assembly of 30S ribosomal subunit, possibly for assembly of the head region. Essential for efficient processing of 16S rRNA. May be needed both before and after RbfA during the maturation of 16S rRNA. It has affinity for free ribosomal 30S subunits but not for 70S ribosomes. The sequence is that of Ribosome maturation factor RimM from Pseudomonas savastanoi pv. phaseolicola (strain 1448A / Race 6) (Pseudomonas syringae pv. phaseolicola (strain 1448A / Race 6)).